The following is a 485-amino-acid chain: Glutathione gamma-glutamylcysteinyltransferase 1 (485 aa).

Residues 1–221 (MAMASLYRRS…GFMLISRPHR (221 aa)) form the Peptidase C83 domain. Residues Cys56, His162, and Asp180 contribute to the active site.

Belongs to the phytochelatin synthase family. Expressed in roots and shoots.

The enzyme catalyses [Glu(-Cys)](n)-Gly + glutathione + H(+) = [Glu(-Cys)](n+1)-Gly + glycine. With respect to regulation, requires cadmium for activity. Also activated in vitro or in heterologous system by Ag(+), Hg(+), Zn(2+), Cu(2+), Fe(2+) or Fe(3+) ions, but not by Co(2+) or Ni(2+) ions. Its function is as follows. Involved in the synthesis of phytochelatins (PC) and homophytochelatins (hPC), the heavy-metal-binding peptides of plants. Also involved in glutathione-conjugates degradation. The polypeptide is Glutathione gamma-glutamylcysteinyltransferase 1 (PCS1) (Arabidopsis thaliana (Mouse-ear cress)).